The sequence spans 345 residues: MVINCAFIGFGKSTTRYHLPYVLNRKDSWHVAHIFRRHAKPEEQAPIYSHIHFTSDLDEVLNDPDVKLVVVCTHADSHFEYAKRALEAGKNVLVEKPFTPTLAQAKELFALAKSKGLTVTPYQNRRFDSCFLTAKKAIESGKLGEIVEVESHFDYYRPVAETKPGLPQDGAFYGLGVHTMDQIISLFGRPDHVAYDIRSLRNKANPDDTFEAQLFYGDLKAIVKTSHLVKIDYPKFIVHGKKGSFIKYGIDQQETSLKANIMPGEPGFAADDSVGVLEYVNDEGVTVREEMKPEMGDYGRVYDALYQTITHGAPNYVKESEVLTNLEILERGFEQASPSTVTLAK.

It belongs to the Gfo/Idh/MocA family. Biliverdin reductase subfamily.

This is an uncharacterized protein from Escherichia coli (strain K12).